The following is a 510-amino-acid chain: tRNA-2-methylthio-N(6)-dimethylallyladenosine synthase (510 aa).

Residues 19–135 form the MTTase N-terminal domain; that stretch reads RTFEVRTYGC…LPALLDRARH (117 aa). [4Fe-4S] cluster is bound by residues Cys-28, Cys-64, Cys-98, Cys-172, Cys-176, and Cys-179. The Radical SAM core domain maps to 158-394; sequence RESSYAAWVS…IELQERISLE (237 aa). The region spanning 397–467 is the TRAM domain; it reads TAQIGRRVEL…PHHLIADAGL (71 aa). The tract at residues 477-510 is disordered; the sequence is DAHAAGQKPRTGVGLGMPAVGAPDPLPATTGCAR.

Belongs to the methylthiotransferase family. MiaB subfamily. As to quaternary structure, monomer. The cofactor is [4Fe-4S] cluster.

It is found in the cytoplasm. It carries out the reaction N(6)-dimethylallyladenosine(37) in tRNA + (sulfur carrier)-SH + AH2 + 2 S-adenosyl-L-methionine = 2-methylsulfanyl-N(6)-dimethylallyladenosine(37) in tRNA + (sulfur carrier)-H + 5'-deoxyadenosine + L-methionine + A + S-adenosyl-L-homocysteine + 2 H(+). Its function is as follows. Catalyzes the methylthiolation of N6-(dimethylallyl)adenosine (i(6)A), leading to the formation of 2-methylthio-N6-(dimethylallyl)adenosine (ms(2)i(6)A) at position 37 in tRNAs that read codons beginning with uridine. This Mycolicibacterium vanbaalenii (strain DSM 7251 / JCM 13017 / BCRC 16820 / KCTC 9966 / NRRL B-24157 / PYR-1) (Mycobacterium vanbaalenii) protein is tRNA-2-methylthio-N(6)-dimethylallyladenosine synthase.